The chain runs to 311 residues: Aspartate carbamoyltransferase catalytic subunit (311 aa).

Carbamoyl phosphate contacts are provided by Arg55 and Thr56. Lys84 contacts L-aspartate. Positions 105, 133, and 136 each coordinate carbamoyl phosphate. Arg166 and Arg229 together coordinate L-aspartate. 2 residues coordinate carbamoyl phosphate: Leu268 and Pro269.

The protein belongs to the aspartate/ornithine carbamoyltransferase superfamily. ATCase family. Heterododecamer (2C3:3R2) of six catalytic PyrB chains organized as two trimers (C3), and six regulatory PyrI chains organized as three dimers (R2).

The enzyme catalyses carbamoyl phosphate + L-aspartate = N-carbamoyl-L-aspartate + phosphate + H(+). The protein operates within pyrimidine metabolism; UMP biosynthesis via de novo pathway; (S)-dihydroorotate from bicarbonate: step 2/3. Catalyzes the condensation of carbamoyl phosphate and aspartate to form carbamoyl aspartate and inorganic phosphate, the committed step in the de novo pyrimidine nucleotide biosynthesis pathway. The protein is Aspartate carbamoyltransferase catalytic subunit of Alkaliphilus metalliredigens (strain QYMF).